The following is a 384-amino-acid chain: Probable beta-1,3-galactosyltransferase 1 (384 aa).

A helical; Signal-anchor for type II membrane protein transmembrane segment spans residues 21–43 (SVFFMCLASFCLGMFFTNRMWNI). N-linked (GlcNAc...) asparagine glycosylation is found at asparagine 73 and asparagine 105.

It belongs to the glycosyltransferase 31 family. Requires Mn(2+) as cofactor.

The protein localises to the golgi apparatus membrane. It functions in the pathway protein modification; protein glycosylation. Functionally, beta-1,3-galactosyltransferase that transfers galactose from UDP-galactose to substrates with a terminal glycosyl residue. This Arabidopsis thaliana (Mouse-ear cress) protein is Probable beta-1,3-galactosyltransferase 1 (B3GALT1).